Reading from the N-terminus, the 136-residue chain is MMSLSRSHLELIATILQNVLNLGLLTLGLILVLFLGKETVHLADALFVPEQASKYELVEGLVIYFLYFEFIALIVKYFKSGFHFPLRYFVYIGITAIVRLIIVDHKTPMDVLLYSAAILLLVITLWLCNSNRLRRE.

The next 4 helical transmembrane spans lie at 15 to 35 (ILQN…VLFL), 55 to 75 (YELV…ALIV), 82 to 102 (FHFP…RLII), and 108 to 128 (PMDV…LWLC).

It belongs to the PsiE family.

The protein resides in the cell inner membrane. The chain is Protein PsiE from Salmonella arizonae (strain ATCC BAA-731 / CDC346-86 / RSK2980).